A 928-amino-acid polypeptide reads, in one-letter code: ATP-dependent DNA helicase PIF5 (928 aa).

Residues 1 to 49 constitute a mitochondrion transit peptide; the sequence is MLSRLSAVWRPSRVALRIQRVDFTTCGNRLNRSTQPNEPPLVSGIAARS. Disordered regions lie at residues 29 to 141 and 176 to 231; these read RLNR…DVAI and LRAK…FSDA. A compositionally biased stretch (basic and acidic residues) spans 52 to 61; that stretch reads AKAEPVEKRG. 264–271 is a binding site for ATP; sequence GGAGSGKS. 4 disordered regions span residues 389–421, 481–513, 545–572, and 585–607; these read PIPP…APSK, KSSA…AAAE, IYPS…EDTM, and STHE…SQPW. Polar residues predominate over residues 550–566; it reads NDGSSQQTGSSNGANSV. Residues 858-877 mediate DNA binding; it reads QAYVALSRSTRLDNIRLLDF. The tract at residues 898–928 is disordered; the sequence is EELDNEIEDDGTEGDEEALEGDGEYEGEVEE.

Belongs to the helicase family. PIF1 subfamily. In terms of assembly, monomer. It depends on Mg(2+) as a cofactor.

It is found in the mitochondrion. The enzyme catalyses Couples ATP hydrolysis with the unwinding of duplex DNA at the replication fork by translocating in the 5'-3' direction. This creates two antiparallel DNA single strands (ssDNA). The leading ssDNA polymer is the template for DNA polymerase III holoenzyme which synthesizes a continuous strand.. It carries out the reaction ATP + H2O = ADP + phosphate + H(+). In terms of biological role, DNA-dependent ATPase and 5'-3' DNA helicase required for the maintenance of mitochondrial (kinetoplast) genome stability. Involved in processing of minicircle Okazaki fragments. In Trypanosoma brucei brucei (strain 927/4 GUTat10.1), this protein is ATP-dependent DNA helicase PIF5.